The sequence spans 217 residues: Thymidylate kinase (217 aa).

ATP is bound at residue 7–14; the sequence is GIDGAGKS.

This sequence belongs to the thymidylate kinase family.

The enzyme catalyses dTMP + ATP = dTDP + ADP. Its function is as follows. Phosphorylation of dTMP to form dTDP in both de novo and salvage pathways of dTTP synthesis. This Chlorobaculum parvum (strain DSM 263 / NCIMB 8327) (Chlorobium vibrioforme subsp. thiosulfatophilum) protein is Thymidylate kinase.